We begin with the raw amino-acid sequence, 712 residues long: Lactoperoxidase (712 aa).

The signal sequence occupies residues 1 to 26 (MRVLLHLPALLASLILLQAAASTTRA). Residues 27–80 (QTTRTSAISDTVSQAKVQVNKAFLDSRTRLKTAMSSETPTSRQLSEYLKHAKGR) constitute a propeptide that is removed on maturation. An N-linked (GlcNAc...) asparagine glycan is attached at asparagine 106. The cysteines at positions 132 and 145 are disulfide-linked. Residue asparagine 212 is glycosylated (N-linked (GlcNAc...) asparagine). Aspartate 225 contacts heme b. Histidine 226 serves as the catalytic Proton acceptor. Residue aspartate 227 coordinates Ca(2+). 2 cysteine pairs are disulfide-bonded: cysteine 246–cysteine 256 and cysteine 250–cysteine 274. Residues threonine 301, phenylalanine 303, aspartate 305, and serine 307 each contribute to the Ca(2+) site. Position 315 is a phosphoserine (serine 315). 2 N-linked (GlcNAc...) asparagine glycosylation sites follow: asparagine 322 and asparagine 358. Cysteine 354 and cysteine 365 form a disulfide bridge. Residues glutamate 375 and histidine 468 each coordinate heme b. Tyrosine 482 is subject to 3'-nitrotyrosine. 2 cysteine pairs are disulfide-bonded: cysteine 573–cysteine 630 and cysteine 671–cysteine 696.

It belongs to the peroxidase family. XPO subfamily. The cofactor is Ca(2+). Heme b is required as a cofactor. As to expression, mammary gland, milk and salivary gland. Found in bronchial submucosal glands.

It is found in the secreted. The protein localises to the cytoplasm. It carries out the reaction 2 a phenolic donor + H2O2 = 2 a phenolic radical donor + 2 H2O. The enzyme catalyses thiocyanate + H2O2 + H(+) = hypothiocyanous acid + H2O. It catalyses the reaction iodide + H2O2 = hypoiodite + H2O. Heme-containing oxidoreductase which catalyzes the conversion of thiocyanate (SCN(-)) into antimicrobial agent hypothiocyanous acid (OSCN(-)) in the presence of hydrogen peroxide (H2O2). Also involved in the conversion of iodide (I(-)) into hypoiodite (IO(-)) in the presence of H2O2. Responsible for the inactivation of a wide range of micro-organisms and hence, important component of defense mechanism. Shows antibacterial properties against Pseudomonas aeruginosa. The lactoperoxidase-SCN(-)-H2O2 system shows antibacterial properties against Burkholderia cepacia and Haemophilus influenzae in vitro. Present in mammary and salivary gland secretions and may contribute to airway host defense against infection. May contribute to maintaining an appropriate H2O2 cellular level, therefore protecting cells from H2O2-caused injuries and inflammation. This chain is Lactoperoxidase, found in Homo sapiens (Human).